Here is a 1080-residue protein sequence, read N- to C-terminus: uncharacterized protein (1080 aa).

An N-terminal signal peptide occupies residues 1 to 17 (MHKLLVIIAHIIVCAYA). Over 18 to 1042 (DFTGFDNEAG…KSLDLEMIGK (1025 aa)) the chain is Extracellular. Residues N439, N664, and N875 are each glycosylated (N-linked (GlcNAc...) asparagine; by host). Residues 1043 to 1063 (IILLIAFVIVFVILLTIGIIT) traverse the membrane as a helical segment. The Cytoplasmic segment spans residues 1064 to 1080 (LVKRHRETLPEDEYLLP).

The protein resides in the host membrane. This is an uncharacterized protein from Ostreid herpesvirus 1 (isolate France) (OsHV-1).